Consider the following 459-residue polypeptide: Ribulose bisphosphate carboxylase large chain (459 aa).

Positions 1–2 are excised as a propeptide; that stretch reads MS. Residue proline 3 is modified to N-acetylproline. At lysine 14 the chain carries N6,N6,N6-trimethyllysine. Substrate is bound by residues residue 123 and threonine 173. Lysine 175 acts as the Proton acceptor in catalysis. A substrate-binding site is contributed by lysine 177. Mg(2+) is bound by residues lysine 201, aspartate 203, and glutamate 204. Position 201 is an N6-carboxylysine (lysine 201). The active-site Proton acceptor is histidine 294. 3 residues coordinate substrate: arginine 295, histidine 327, and serine 379.

The protein belongs to the RuBisCO large chain family. Type I subfamily. In terms of assembly, heterohexadecamer of 8 large chains and 8 small chains; disulfide-linked. The disulfide link is formed within the large subunit homodimers. Requires Mg(2+) as cofactor. Post-translationally, the disulfide bond which can form in the large chain dimeric partners within the hexadecamer appears to be associated with oxidative stress and protein turnover.

It localises to the plastid. It is found in the chloroplast. It catalyses the reaction 2 (2R)-3-phosphoglycerate + 2 H(+) = D-ribulose 1,5-bisphosphate + CO2 + H2O. The enzyme catalyses D-ribulose 1,5-bisphosphate + O2 = 2-phosphoglycolate + (2R)-3-phosphoglycerate + 2 H(+). Its function is as follows. RuBisCO catalyzes two reactions: the carboxylation of D-ribulose 1,5-bisphosphate, the primary event in carbon dioxide fixation, as well as the oxidative fragmentation of the pentose substrate in the photorespiration process. Both reactions occur simultaneously and in competition at the same active site. In Corynocarpus laevigatus (New Zealand laurel), this protein is Ribulose bisphosphate carboxylase large chain.